An 878-amino-acid polypeptide reads, in one-letter code: Alanine--tRNA ligase (878 aa).

Residues His-565, His-569, Cys-667, and His-671 each coordinate Zn(2+).

The protein belongs to the class-II aminoacyl-tRNA synthetase family. The cofactor is Zn(2+).

The protein localises to the cytoplasm. The enzyme catalyses tRNA(Ala) + L-alanine + ATP = L-alanyl-tRNA(Ala) + AMP + diphosphate. Functionally, catalyzes the attachment of alanine to tRNA(Ala) in a two-step reaction: alanine is first activated by ATP to form Ala-AMP and then transferred to the acceptor end of tRNA(Ala). Also edits incorrectly charged Ser-tRNA(Ala) and Gly-tRNA(Ala) via its editing domain. The protein is Alanine--tRNA ligase of Desulforamulus reducens (strain ATCC BAA-1160 / DSM 100696 / MI-1) (Desulfotomaculum reducens).